The primary structure comprises 655 residues: p-hydroxybenzoic acid efflux pump subunit AaeB (655 aa).

The Periplasmic segment spans residues 1–12; it reads MGIFSIANQHIR. Residues 13 to 33 traverse the membrane as a helical segment; that stretch reads FAVKLATAIVLALFVGFHFQL. The Cytoplasmic segment spans residues 34–37; the sequence is ETPR. The helical transmembrane segment at 38-58 threads the bilayer; sequence WAVLTAAIVAAGTAFAAGGEP. At 59–68 the chain is on the periplasmic side; sequence YSGAIRYRGF. The chain crosses the membrane as a helical span at residues 69 to 89; the sequence is LRIIGTFIGCIAGLVIIIAMI. At 90 to 92 the chain is on the cytoplasmic side; it reads RAP. A helical membrane pass occupies residues 93-113; it reads LLMILVCCIWAGFCTWISSLV. Residues 114-120 lie on the Periplasmic side of the membrane; that stretch reads RIENSYA. The helical transmembrane segment at 121–141 threads the bilayer; the sequence is WGLAGYTALIIVITIQPEPLL. Residues 142-151 lie on the Cytoplasmic side of the membrane; the sequence is TPQFAVERCS. A helical membrane pass occupies residues 152–172; that stretch reads EIVIGIVCAIMADLLFSPRSI. The Periplasmic segment spans residues 173-369; that stretch reads KQEVDRELES…RTTLSCILGT (197 aa). Residues 370-390 traverse the membrane as a helical segment; the sequence is LFWLWTGWTSGSGAMVMIAVV. The Cytoplasmic portion of the chain corresponds to 391 to 406; sequence TSLAMRLPNPRMVAID. The chain crosses the membrane as a helical span at residues 407 to 427; the sequence is FIYGTLAALPLGLLYFLVIIP. Residues 428–430 lie on the Periplasmic side of the membrane; that stretch reads NTQ. A helical transmembrane segment spans residues 431–451; it reads QSMLLLCISLAVLGFFLGIEV. The Cytoplasmic portion of the chain corresponds to 452-458; sequence QKRRLGS. Residues 459–479 form a helical membrane-spanning segment; that stretch reads MGALASTINIIVLDNPMTFHF. Topologically, residues 480–481 are periplasmic; sequence SQ. A helical membrane pass occupies residues 482-502; that stretch reads FLDSALGQIVGCVLAFTVILL. Residues 503 to 655 are Cytoplasmic-facing; sequence VRDKSRDRTG…HKYQHALTDS (153 aa).

The protein belongs to the aromatic acid exporter ArAE (TC 2.A.85) family.

The protein localises to the cell inner membrane. Functionally, forms an efflux pump with AaeA. Could function as a metabolic relief valve, allowing to eliminate certain compounds when they accumulate to high levels in the cell. Substrates are p-hydroxybenzoic acid (pHBA), 6-hydroxy-2-naphthoic and 2-hydroxycinnamate. This chain is p-hydroxybenzoic acid efflux pump subunit AaeB, found in Escherichia coli (strain K12).